We begin with the raw amino-acid sequence, 274 residues long: Transcription factor MYB58 (274 aa).

2 consecutive HTH myb-type domains span residues 11 to 63 (KTKV…INYL) and 64 to 118 (RPDV…KKRL). 2 consecutive DNA-binding regions (H-T-H motif) follow at residues 39–63 (WRSL…INYL) and 91–114 (WSKI…HTHL). Disordered regions lie at residues 121–160 (ETNL…ISSK) and 237–274 (SELG…LLIH). The segment covering 263-274 (SSLLESYELLIH) has biased composition (low complexity).

Expressed in leaves. Specifically expressed in fibers and vessels undergoing secondary wall thickening, especially in inflorescence stems.

It localises to the nucleus. Its function is as follows. Transcriptional activator that binds DNA to the AC cis-elements 5'-ACCTACC-3', 5'-ACCAACC-3' and 5'-ACCTAAC-3' of promoters and specifically activates lignin biosynthetic genes during secondary wall formation mediated by SND1. The sequence is that of Transcription factor MYB58 from Arabidopsis thaliana (Mouse-ear cress).